We begin with the raw amino-acid sequence, 462 residues long: Metacaspase-1 (462 aa).

A compositionally biased stretch (pro residues) spans 1 to 21 (MSYYPPPSGYPGGPPAYPPPQ). A disordered region spans residues 1–150 (MSYYPPPSGY…PPPPSGSVAF (150 aa)). Over residues 22-33 (QQQQQQQQYPSY) the composition is skewed to low complexity. 2 stretches are compositionally biased toward pro residues: residues 49-69 (PSYPPPGQYGHPPQPGYPPHS) and 77-102 (SPQPPYGHPPPQHPPHQPPHRPPPSP). Active-site residues include histidine 253 and cysteine 309.

This sequence belongs to the peptidase C14B family.

Involved in cell death (apoptosis). This Coccidioides immitis (strain RS) (Valley fever fungus) protein is Metacaspase-1 (MCA1).